Reading from the N-terminus, the 438-residue chain is Methyl-coenzyme M reductase subunit beta (438 aa).

A coenzyme M-binding site is contributed by Tyr367. Gly369 is a coenzyme B binding site.

The protein belongs to the methyl-coenzyme M reductase beta subunit family. MCR is a hexamer of two alpha, two beta, and two gamma chains, forming a dimer of heterotrimers. Coenzyme F430 is required as a cofactor.

The protein resides in the cytoplasm. It carries out the reaction coenzyme B + methyl-coenzyme M = methane + coenzyme M-coenzyme B heterodisulfide. It participates in one-carbon metabolism; methyl-coenzyme M reduction; methane from methyl-coenzyme M: step 1/1. Functionally, component of the methyl-coenzyme M reductase (MCR) I that catalyzes the reductive cleavage of methyl-coenzyme M (CoM-S-CH3 or 2-(methylthio)ethanesulfonate) using coenzyme B (CoB or 7-mercaptoheptanoylthreonine phosphate) as reductant which results in the production of methane and the mixed heterodisulfide of CoB and CoM (CoM-S-S-CoB). This is the final step in methanogenesis. The chain is Methyl-coenzyme M reductase subunit beta (mcrB) from Methanothermus fervidus.